The primary structure comprises 156 residues: Ribosomal RNA large subunit methyltransferase H (156 aa).

Residues leucine 73, glycine 104, and leucine 123–leucine 128 contribute to the S-adenosyl-L-methionine site.

It belongs to the RNA methyltransferase RlmH family. Homodimer.

The protein resides in the cytoplasm. It catalyses the reaction pseudouridine(1915) in 23S rRNA + S-adenosyl-L-methionine = N(3)-methylpseudouridine(1915) in 23S rRNA + S-adenosyl-L-homocysteine + H(+). In terms of biological role, specifically methylates the pseudouridine at position 1915 (m3Psi1915) in 23S rRNA. The sequence is that of Ribosomal RNA large subunit methyltransferase H from Marinobacter nauticus (strain ATCC 700491 / DSM 11845 / VT8) (Marinobacter aquaeolei).